The following is a 352-amino-acid chain: Small ribosomal subunit biogenesis GTPase RsgA 2 (352 aa).

Positions 100–257 (RQDGQIIATN…VIDTPGMREL (158 aa)) constitute a CP-type G domain. Residues 147–150 (TKAD) and 199–207 (GSSGVGKST) contribute to the GTP site. Zn(2+) contacts are provided by Cys-278, Cys-283, His-285, and Cys-291.

Belongs to the TRAFAC class YlqF/YawG GTPase family. RsgA subfamily. As to quaternary structure, monomer. Associates with 30S ribosomal subunit, binds 16S rRNA. Requires Zn(2+) as cofactor.

Its subcellular location is the cytoplasm. In terms of biological role, one of several proteins that assist in the late maturation steps of the functional core of the 30S ribosomal subunit. Helps release RbfA from mature subunits. May play a role in the assembly of ribosomal proteins into the subunit. Circularly permuted GTPase that catalyzes slow GTP hydrolysis, GTPase activity is stimulated by the 30S ribosomal subunit. This chain is Small ribosomal subunit biogenesis GTPase RsgA 2, found in Lactiplantibacillus plantarum (strain ATCC BAA-793 / NCIMB 8826 / WCFS1) (Lactobacillus plantarum).